Here is a 351-residue protein sequence, read N- to C-terminus: Large ribosomal subunit protein uL3 (351 aa).

Disordered stretches follow at residues 1–31 and 246–271; these read MGHR…TPRT and KGSR…GQLG.

It belongs to the universal ribosomal protein uL3 family. Part of the 50S ribosomal subunit. Forms a cluster with proteins L14 and L24e.

Its function is as follows. One of the primary rRNA binding proteins, it binds directly near the 3'-end of the 23S rRNA, where it nucleates assembly of the 50S subunit. This is Large ribosomal subunit protein uL3 from Saccharolobus islandicus (strain Y.N.15.51 / Yellowstone #2) (Sulfolobus islandicus).